The following is a 276-amino-acid chain: Cruxhalorhodopsin-3 (276 aa).

Residues 1 to 21 (MPAASTAATTLLQASQSEVLG) constitute a propeptide that is removed on maturation. Residues 22–25 (EIQS) lie on the Extracellular side of the membrane. Residues 26–51 (NFLLNSSLWVNIALAGVVILLFVAMG) traverse the membrane as a helical segment. At 52–57 (RELESS) the chain is on the cytoplasmic side. A helical membrane pass occupies residues 58–81 (RAKLIWVATMLVPLVSISSYAGLA). Over 82-105 (SGLTVGFLQMPPGHALAGQEVLSP) the chain is Extracellular. Residues 106–127 (WGRYLTWTFSTPMILLALGLLA) traverse the membrane as a helical segment. The Cytoplasmic portion of the chain corresponds to 128–130 (DTD). The helical transmembrane segment at 131–154 (MASLFTAITMDIGMCITGLAAALV) threads the bilayer. Residues 155–157 (TSS) are Extracellular-facing. Residues 158-180 (HLLRWVFYGISCAFFIAVLYVLL) traverse the membrane as a helical segment. At 181–192 (VEWPADAEAAGT) the chain is on the cytoplasmic side. Residues 193 to 216 (SEIFGTLKLLTVVLWLGYPILWAL) form a helical membrane-spanning segment. The Extracellular portion of the chain corresponds to 217–225 (GSEGVALLS). The chain crosses the membrane as a helical span at residues 226 to 254 (VGVTSWGYSGLDILAKYVFAFLLLRWVAA). K241 bears the N6-(retinylidene)lysine mark. The Cytoplasmic portion of the chain corresponds to 255–276 (NEDTVTQAGMSLGSGGAAPADD).

The protein belongs to the archaeal/bacterial/fungal opsin family.

It is found in the cell membrane. In terms of biological role, light-driven chloride pump. This chain is Cruxhalorhodopsin-3 (choP3), found in Haloarcula vallismortis (Halobacterium vallismortis).